A 159-amino-acid chain; its full sequence is MTIEPRATADLVDDIGPDVRSCDLQLRQFGRRPEFAGRVTTVRCFQDNALLKSVLSEPGDGGVLVIDGDGSLHTALVGDVIAALGRDNGWSGLIINGAVRDASTLRTLDIGIKALGTNPRKSTKTGAGERDVPVDFGGVTFTPGDVAYSDDDGIVVVTP.

Substrate is bound by residues 78–81 (GDVI) and Arg-100. Asp-101 serves as a coordination point for a divalent metal cation.

Belongs to the class II aldolase/RraA-like family. As to quaternary structure, homotrimer. It depends on a divalent metal cation as a cofactor.

It carries out the reaction 4-hydroxy-4-methyl-2-oxoglutarate = 2 pyruvate. The enzyme catalyses oxaloacetate + H(+) = pyruvate + CO2. Catalyzes the aldol cleavage of 4-hydroxy-4-methyl-2-oxoglutarate (HMG) into 2 molecules of pyruvate. Also contains a secondary oxaloacetate (OAA) decarboxylase activity due to the common pyruvate enolate transition state formed following C-C bond cleavage in the retro-aldol and decarboxylation reactions. The protein is Putative 4-hydroxy-4-methyl-2-oxoglutarate aldolase of Mycobacterium sp. (strain KMS).